A 424-amino-acid polypeptide reads, in one-letter code: Serine--tRNA ligase (424 aa).

Residue 231–233 (TAE) coordinates L-serine. Residue 262–264 (RSE) participates in ATP binding. E285 provides a ligand contact to L-serine. Residue 349 to 352 (EISS) participates in ATP binding. S385 lines the L-serine pocket.

The protein belongs to the class-II aminoacyl-tRNA synthetase family. Type-1 seryl-tRNA synthetase subfamily. Homodimer. The tRNA molecule binds across the dimer.

Its subcellular location is the cytoplasm. The enzyme catalyses tRNA(Ser) + L-serine + ATP = L-seryl-tRNA(Ser) + AMP + diphosphate + H(+). It catalyses the reaction tRNA(Sec) + L-serine + ATP = L-seryl-tRNA(Sec) + AMP + diphosphate + H(+). Its pathway is aminoacyl-tRNA biosynthesis; selenocysteinyl-tRNA(Sec) biosynthesis; L-seryl-tRNA(Sec) from L-serine and tRNA(Sec): step 1/1. Its function is as follows. Catalyzes the attachment of serine to tRNA(Ser). Is also able to aminoacylate tRNA(Sec) with serine, to form the misacylated tRNA L-seryl-tRNA(Sec), which will be further converted into selenocysteinyl-tRNA(Sec). This Bacillus cereus (strain ATCC 10987 / NRS 248) protein is Serine--tRNA ligase.